The following is a 160-amino-acid chain: Growth arrest and DNA damage-inducible protein GADD45 beta (160 aa).

This sequence belongs to the GADD45 family. As to quaternary structure, interacts with GADD45GIP1.

Involved in the regulation of growth and apoptosis. Mediates activation of stress-responsive MTK1/MEKK4 MAPKKK. This Bos taurus (Bovine) protein is Growth arrest and DNA damage-inducible protein GADD45 beta (GADD45B).